The chain runs to 99 residues: Transcription factor 1 (99 aa).

May be involved in preference for HM-URA DNA regions lie at residues 52-77 (PVAR…SVGV) and 90-99 (EGLKYEDFAK). 2 DNA-binding regions span residues Phe61 and 93–94 (KY).

It belongs to the bacterial histone-like protein family. In terms of assembly, homodimer.

Its function is as follows. Selectively binds to and inhibits the transcription of hydroxymethyluracil-(hmUra)-containing DNA, such as SP01 DNA, by RNA polymerase in vitro. This chain is Transcription factor 1 (TF1), found in Bacillus phage SP01 (Bacteriophage SP01).